The following is a 24-amino-acid chain: Caerin-2.1 (24 aa).

Belongs to the frog skin active peptide (FSAP) family. Caerin subfamily. Expressed by the skin dorsal glands.

The protein localises to the secreted. Functionally, inhibits the formation of NO by neuronal nitric oxide synthase. The protein is Caerin-2.1 of Litoria rothii (Roth's tree frog).